A 419-amino-acid chain; its full sequence is Zinc finger protein Pegasus (419 aa).

3 consecutive C2H2-type zinc fingers follow at residues 79–101, 107–129, and 135–158; these read LKCR…IRIH, HRCH…MRSH, and YKCE…RRRH. 2 disordered regions span residues 203-255 and 310-360; these read LQKP…DQDM and SVNT…TPVQ. Residues 208-228 show a composition bias toward basic and acidic residues; the sequence is SEQHHLGDFTHDLPPHAHLHQ. Polar residues-rich tracts occupy residues 310–320 and 341–360; these read SVNTAQASSPI and ERTS…TPVQ. 2 consecutive C2H2-type zinc fingers follow at residues 366–388 and 394–418; these read HHCP…MGCH and FQCN…RGQH.

Belongs to the Ikaros C2H2-type zinc-finger protein family. As to quaternary structure, probably self-associates.

The protein resides in the nucleus. In terms of biological role, transcriptional repressor that binds the core 5'GNNTGTNG-3' DNA consensus sequence. This is Zinc finger protein Pegasus (ikzf5) from Danio rerio (Zebrafish).